The primary structure comprises 65 residues: DNA gyrase inhibitor YacG (65 aa).

Positions 10, 13, 29, and 33 each coordinate Zn(2+). Residues 45-65 are disordered; the sequence is EKAIPGAPDMSDSDGWSEDQY. The span at 55 to 65 shows a compositional bias: acidic residues; the sequence is SDSDGWSEDQY.

Belongs to the DNA gyrase inhibitor YacG family. As to quaternary structure, interacts with GyrB. Requires Zn(2+) as cofactor.

Functionally, inhibits all the catalytic activities of DNA gyrase by preventing its interaction with DNA. Acts by binding directly to the C-terminal domain of GyrB, which probably disrupts DNA binding by the gyrase. In Vibrio cholerae serotype O1 (strain ATCC 39315 / El Tor Inaba N16961), this protein is DNA gyrase inhibitor YacG.